We begin with the raw amino-acid sequence, 384 residues long: S-adenosylmethionine synthase (384 aa).

His-15 serves as a coordination point for ATP. Residue Asp-17 coordinates Mg(2+). A K(+)-binding site is contributed by Glu-43. Positions 56 and 99 each coordinate L-methionine. The segment at 99 to 109 (QSPDINQGVDR) is flexible loop. Residues 164–166 (DAK), 230–231 (RF), Asp-239, 245–246 (RK), Ala-262, and Lys-266 contribute to the ATP site. Asp-239 serves as a coordination point for L-methionine. L-methionine is bound at residue Lys-270.

The protein belongs to the AdoMet synthase family. In terms of assembly, homotetramer; dimer of dimers. The cofactor is Mg(2+). K(+) is required as a cofactor.

The protein resides in the cytoplasm. The catalysed reaction is L-methionine + ATP + H2O = S-adenosyl-L-methionine + phosphate + diphosphate. It participates in amino-acid biosynthesis; S-adenosyl-L-methionine biosynthesis; S-adenosyl-L-methionine from L-methionine: step 1/1. In terms of biological role, catalyzes the formation of S-adenosylmethionine (AdoMet) from methionine and ATP. The overall synthetic reaction is composed of two sequential steps, AdoMet formation and the subsequent tripolyphosphate hydrolysis which occurs prior to release of AdoMet from the enzyme. The chain is S-adenosylmethionine synthase from Salmonella choleraesuis (strain SC-B67).